A 117-amino-acid chain; its full sequence is Protein Wnt-10b (117 aa).

Residue Ser1 is the site of O-palmitoleoyl serine; by PORCN attachment. Cysteines 83 and 98 form a disulfide. A glycan (N-linked (GlcNAc...) asparagine) is linked at Asn84.

Belongs to the Wnt family. Post-translationally, palmitoleoylation is required for efficient binding to frizzled receptors. Depalmitoleoylation leads to Wnt signaling pathway inhibition.

The protein localises to the secreted. It localises to the extracellular space. Its subcellular location is the extracellular matrix. Member of the Wnt ligand gene family that encodes for secreted proteins, which activate the Wnt signaling cascade. Involved in neurogenesis. Performs a partially redundant function with wnt1 in the formation of the midbrain-hindbrain boundary (MHB) organizer. This chain is Protein Wnt-10b (WNT-10B), found in Plethodon jordani (Red-cheeked salamander).